A 64-amino-acid polypeptide reads, in one-letter code: MNEDQNRAVALLLAELWQGDTRDIPRPAAYDPPVLCAGCGRELRPDVLRQQPMANYCHWCRGAE.

It is found in the host cytoplasm. This is an uncharacterized protein from Enterobacteriaceae (Bacteriophage Mu).